The sequence spans 103 residues: Iron-sulfur cluster assembly protein CyaY (103 aa).

The protein belongs to the frataxin family.

Functionally, involved in iron-sulfur (Fe-S) cluster assembly. May act as a regulator of Fe-S biogenesis. The polypeptide is Iron-sulfur cluster assembly protein CyaY (Rickettsia peacockii (strain Rustic)).